Reading from the N-terminus, the 69-residue chain is DNA gyrase inhibitor YacG (69 aa).

A disordered region spans residues 1 to 28 (MSGEGKKHGSNVEPLRPTRPCPECGRPS). Positions 21, 24, 36, and 40 each coordinate Zn(2+).

The protein belongs to the DNA gyrase inhibitor YacG family. In terms of assembly, interacts with GyrB. Zn(2+) serves as cofactor.

Functionally, inhibits all the catalytic activities of DNA gyrase by preventing its interaction with DNA. Acts by binding directly to the C-terminal domain of GyrB, which probably disrupts DNA binding by the gyrase. The sequence is that of DNA gyrase inhibitor YacG from Sinorhizobium fredii (strain NBRC 101917 / NGR234).